Consider the following 119-residue polypeptide: Ribosome-binding factor A (119 aa).

The protein belongs to the RbfA family. Monomer. Binds 30S ribosomal subunits, but not 50S ribosomal subunits or 70S ribosomes.

The protein resides in the cytoplasm. Functionally, one of several proteins that assist in the late maturation steps of the functional core of the 30S ribosomal subunit. Associates with free 30S ribosomal subunits (but not with 30S subunits that are part of 70S ribosomes or polysomes). Required for efficient processing of 16S rRNA. May interact with the 5'-terminal helix region of 16S rRNA. The sequence is that of Ribosome-binding factor A from Coxiella burnetii (strain CbuK_Q154) (Coxiella burnetii (strain Q154)).